The primary structure comprises 363 residues: MAGKSPEEQHPVKAYGWAATDSSGILSPFKFSRRATGDHDVRVKILYAGVCHSDLQSARNDMGCFTYPLVPGFETVGTATEVGSKVTKVKVGDKVAVGIMVGSCGKCDECVNDRECYCPEVITSYGRIDHDGTPTYGGFSSETVANEKFVFCFPEKLPMAAGAPLLNAGVSVYSAMRFYGLDKPGMHLGVVGLGGLGHLAVKFAKAFGVKVTVISTSTSKKGEAINDLGADAFLVSTDAEQMQAGSGTLDGILDTVPVVHPIEALLGLLKNHTKLVLVGATMGSFELPILPLGVGRKSVVSTIGGSTKETQEMLDFAAEHDITASVEIIPMDYVNTAMERIEKGDVRYRFVIDIGNTLTPPES.

An Enoyl reductase (ER) domain is found at 24 to 352; the sequence is GILSPFKFSR…KGDVRYRFVI (329 aa). C51 provides a ligand contact to Zn(2+). S53 provides a ligand contact to NADP(+). Residues D54, E74, C104, C107, C110, and C118 each contribute to the Zn(2+) site. The NADP(+) site is built by L193, G195, L196, S215, T216, S217, K220, K221, V278, A280, T302, and R349.

Belongs to the zinc-containing alcohol dehydrogenase family. Class-P subfamily. As to quaternary structure, homodimer. Zn(2+) serves as cofactor. As to expression, mainly expressed in mature roots and, to a lower extent, in stems and leaves.

The protein resides in the cytoplasm. It carries out the reaction 17-O-acetylnorajmaline + NADP(+) = (2R)-1,2-dihydrovomilenine + NADPH + 2 H(+). The catalysed reaction is (20S)-19,20-dihydrovomilenine + NADP(+) = vomilenine + NADPH + H(+). It functions in the pathway alkaloid biosynthesis; ajmaline biosynthesis. Alcohol dehydrogenase involved in the biosynthesis of ajmaline-type monoterpenoid indole alkaloids (MIAs) natural products, important plant-derived pharmaceuticals used in the therapy of heart disorders. Catalyzes the conversion of 1,2-dihydrovomilenine to 17-O-acetylnorajmaline, an intermediate chemical in the biosynthesis of ajmaline. Also able, with a lower efficiency, to convert vomilenine into 19,20-dihydrovomilenine. The polypeptide is 1,2-Dihydrovomilenine reductase (Rauvolfia serpentina (Serpentine wood)).